Reading from the N-terminus, the 570-residue chain is Sulfite reductase [NADPH] hemoprotein beta-component (570 aa).

The [4Fe-4S] cluster site is built by C434, C440, C479, and C483. C483 is a siroheme binding site.

The protein belongs to the nitrite and sulfite reductase 4Fe-4S domain family. Alpha(8)-beta(8). The alpha component is a flavoprotein, the beta component is a hemoprotein. Siroheme is required as a cofactor. The cofactor is [4Fe-4S] cluster.

The enzyme catalyses hydrogen sulfide + 3 NADP(+) + 3 H2O = sulfite + 3 NADPH + 4 H(+). Its pathway is sulfur metabolism; hydrogen sulfide biosynthesis; hydrogen sulfide from sulfite (NADPH route): step 1/1. Functionally, component of the sulfite reductase complex that catalyzes the 6-electron reduction of sulfite to sulfide. This is one of several activities required for the biosynthesis of L-cysteine from sulfate. The sequence is that of Sulfite reductase [NADPH] hemoprotein beta-component from Shigella sonnei (strain Ss046).